The chain runs to 752 residues: Palmitoyltransferase AKR1 (752 aa).

Disordered stretches follow at residues 1–21 and 49–68; these read MTAE…KSDY and ASSE…LGSV. Topologically, residues 1–318 are cytoplasmic; that stretch reads MTAEEVDKES…FPLPQYFSAS (318 aa). Composition is skewed to basic and acidic residues over residues 9–21 and 51–68; these read ESDP…KSDY and SELK…LGSV. ANK repeat units follow at residues 72 to 102, 108 to 137, 142 to 171, 175 to 208, 212 to 241, and 245 to 274; these read PILE…DLSN, ERVS…EVNF, LDAT…DPNI, QGYN…DVDQ, HQRT…DVKN, and AGFT…DFFQ. A helical membrane pass occupies residues 319–339; it reads TGKMLTFFLPWVLIPLVFYIF. Over 340–341 the chain is Lumenal; that stretch reads SK. A helical membrane pass occupies residues 342-362; that stretch reads ITFFIALLINTIVLVISGLVL. Over 363-380 the chain is Cytoplasmic; it reads SRLVVPSYLLSKRHPILN. The chain crosses the membrane as a helical span at residues 381–401; it reads SPLLAGILSGTIAIAFFIWFT. At 402–412 the chain is on the lumenal side; sequence KISILTFTEKP. A helical transmembrane segment spans residues 413 to 433; that stretch reads VGNIIMLGFFIGLITLFIGLM. At 434–509 the chain is on the cytoplasmic side; it reads KSDPGYIPGT…YNQIGLLNHK (76 aa). One can recognise a DHHC domain in the interval 466–516; the sequence is HFCVHTWIRIPLRSKYDRDSACLISAFDHFCPWVYNQIGLLNHKLFYMFVV. Cys-496 acts as the S-palmitoyl cysteine intermediate in catalysis. A helical membrane pass occupies residues 510–530; that stretch reads LFYMFVVLLEISVWWFLPLMM. The Lumenal portion of the chain corresponds to 531-567; sequence EYFDELEDYLENRKGKHFGDCHFLGDEDLCFGLHHDT. A helical transmembrane segment spans residues 568–588; it reads FNFLLLCWVIFQAFWVLCLIA. Topologically, residues 589–752 are cytoplasmic; the sequence is VQTVQMLKGV…TLPNATEELV (164 aa).

It belongs to the DHHC palmitoyltransferase family. AKR/ZDHHC17 subfamily.

Its subcellular location is the early endosome membrane. It is found in the golgi apparatus membrane. It carries out the reaction L-cysteinyl-[protein] + hexadecanoyl-CoA = S-hexadecanoyl-L-cysteinyl-[protein] + CoA. Palmitoyltransferase specific for casein kinase 1. The protein is Palmitoyltransferase AKR1 (AKR1) of Kluyveromyces lactis (strain ATCC 8585 / CBS 2359 / DSM 70799 / NBRC 1267 / NRRL Y-1140 / WM37) (Yeast).